Here is a 461-residue protein sequence, read N- to C-terminus: Argininosuccinate lyase (461 aa).

It belongs to the lyase 1 family. Argininosuccinate lyase subfamily.

It is found in the cytoplasm. It carries out the reaction 2-(N(omega)-L-arginino)succinate = fumarate + L-arginine. Its pathway is amino-acid biosynthesis; L-arginine biosynthesis; L-arginine from L-ornithine and carbamoyl phosphate: step 3/3. The chain is Argininosuccinate lyase from Laribacter hongkongensis (strain HLHK9).